The sequence spans 411 residues: Translation initiation factor 2 subunit gamma (411 aa).

Positions Gln9–Lys203 constitute a tr-type G domain. The interval Gly18–Thr25 is G1. Residues Asp21, Thr25, Gly46, and Thr48 each coordinate Mg(2+). Residue Asp21–Thr26 coordinates GTP. Residues Gly46–Lys50 are G2. Zn(2+) is bound by residues Cys61, Cys64, Cys73, and Cys76. Positions Asp90–Gly93 are G3. GTP contacts are provided by residues Asn146–Glu149 and Ser181–Leu183. Positions Asn146–Glu149 are G4. Residues Ser181–Leu183 form a G5 region.

The protein belongs to the TRAFAC class translation factor GTPase superfamily. Classic translation factor GTPase family. EIF2G subfamily. As to quaternary structure, heterotrimer composed of an alpha, a beta and a gamma chain. Mg(2+) serves as cofactor.

It carries out the reaction GTP + H2O = GDP + phosphate + H(+). In terms of biological role, eIF-2 functions in the early steps of protein synthesis by forming a ternary complex with GTP and initiator tRNA. In Pyrococcus horikoshii (strain ATCC 700860 / DSM 12428 / JCM 9974 / NBRC 100139 / OT-3), this protein is Translation initiation factor 2 subunit gamma.